Consider the following 53-residue polypeptide: Conotoxin-like peptide 1 (53 aa).

The N-terminal stretch at 1-18 is a signal peptide; that stretch reads MGVKSALFIMAVFAAANV. Cystine bridges form between cysteine 25–cysteine 39, cysteine 32–cysteine 43, and cysteine 38–cysteine 50.

The protein localises to the secreted. In Orgyia pseudotsugata multicapsid polyhedrosis virus (OpMNPV), this protein is Conotoxin-like peptide 1 (CTL-1).